Consider the following 126-residue polypeptide: Fluoride-specific ion channel FluC (126 aa).

Helical transmembrane passes span 4-24 (PLLS…FLGL), 33-53 (IPLG…FAMA), 67-87 (FVIT…IEIV), and 97-117 (MAML…CLGL). Gly-74 and Thr-77 together coordinate Na(+).

The protein belongs to the fluoride channel Fluc/FEX (TC 1.A.43) family.

It localises to the cell inner membrane. The enzyme catalyses fluoride(in) = fluoride(out). With respect to regulation, na(+) is not transported, but it plays an essential structural role and its presence is essential for fluoride channel function. In terms of biological role, fluoride-specific ion channel. Important for reducing fluoride concentration in the cell, thus reducing its toxicity. This chain is Fluoride-specific ion channel FluC, found in Acinetobacter baumannii (strain AB307-0294).